Consider the following 322-residue polypeptide: 4-diphosphocytidyl-2-C-methyl-D-erythritol kinase (322 aa).

The active site involves Lys18. 130 to 140 (PMGAGLGGGSS) serves as a coordination point for ATP. Residue Asp172 is part of the active site.

The protein belongs to the GHMP kinase family. IspE subfamily.

The catalysed reaction is 4-CDP-2-C-methyl-D-erythritol + ATP = 4-CDP-2-C-methyl-D-erythritol 2-phosphate + ADP + H(+). Its pathway is isoprenoid biosynthesis; isopentenyl diphosphate biosynthesis via DXP pathway; isopentenyl diphosphate from 1-deoxy-D-xylulose 5-phosphate: step 3/6. Functionally, catalyzes the phosphorylation of the position 2 hydroxy group of 4-diphosphocytidyl-2C-methyl-D-erythritol. This chain is 4-diphosphocytidyl-2-C-methyl-D-erythritol kinase, found in Psychrobacter arcticus (strain DSM 17307 / VKM B-2377 / 273-4).